Consider the following 1214-residue polypeptide: Transient receptor potential cation channel subfamily M member 4 (1214 aa).

Residues 1 to 782 (MVVPEKEQSW…FHFWGAPVTI (782 aa)) are Cytoplasmic-facing. Residues Arg-171, Arg-214, and Leu-225 each contribute to the ATP site. Residues Asp-270, Ala-392, Asp-395, and Glu-396 each contribute to the Ca(2+) site. The ATP site is built by Arg-421 and Gly-448. The chain crosses the membrane as a helical span at residues 783-803 (FMGNVVSYLLFLLLFSRVLLV). Residues 804–814 (DFQPAPPGSLE) are Extracellular-facing. A helical membrane pass occupies residues 815-835 (LLLYFWAFTLLCEELRQGLSG). Ca(2+) contacts are provided by Glu-828 and Gln-831. Over 836-863 (GGGSLASGGPGPGHASLSQRLRLYLADS) the chain is Cytoplasmic. The chain crosses the membrane as a helical span at residues 864-884 (WNQCDLVALTCFLLGVGCRLT). Ca(2+)-binding residues include Asn-865 and Asp-868. Topologically, residues 885–886 (PG) are extracellular. The helical transmembrane segment at 887 to 910 (LYHLGRTVLCIDFMVFTVRLLHIF) threads the bilayer. At 911–930 (TVNKQLGPKIVIVSKMMKDV) the chain is on the cytoplasmic side. A helical transmembrane segment spans residues 931–951 (FFFLFFLGVWLVAYGVATEGL). At 952–963 (LRPRDSDFPSIL) the chain is on the extracellular side. An intramembrane region (pore-forming) is located at residues 964 to 984 (RRVFYRPYLQIFGQIPQEDMD). The short motif at 975-977 (FGQ) is the Selectivity filter element. Over 985–1019 (VALMEHSNCSSEPGFWAHPPGAQAGTCVSQYANWL) the chain is Extracellular. The N-linked (GlcNAc...) asparagine glycan is linked to Asn-992. An intrachain disulfide couples Cys-993 to Cys-1011. A helical transmembrane segment spans residues 1020–1040 (VVLLLVIFLLVANILLVNLLI). The Cytoplasmic segment spans residues 1041–1214 (AMFSYTFGKV…PPPDLPGSKD (174 aa)). The interval 1076 to 1176 (APPFIVISHL…EYEQRLKVLE (101 aa)) is calmodulin-binding. Residues 1134 to 1187 (LARARDKRESDSERLKRTSQKVDLALKQLGHIREYEQRLKVLEREVQQCSRVLG) adopt a coiled-coil conformation. The interval 1136–1141 (RARDKR) is mediates modulation by decavanadate and PIP2-binding. Ser-1145 and Ser-1152 each carry phosphoserine; by PKC.

Belongs to the transient receptor (TC 1.A.4) family. LTrpC subfamily. TRPM4 sub-subfamily. Homotetramer. In terms of processing, phosphorylation by PKC leads to increase the sensitivity to Ca(2+). Post-translationally, sumoylated. Desumoylated by SENP1. In terms of tissue distribution, widely expressed with a high expression in intestine and prostate. In brain, it is both expressed in whole cerebral arteries and isolated vascular smooth muscle cells. Prominently expressed in Purkinje fibers. Expressed at higher levels in T-helper 2 (Th2) cells as compared to T-helper 1 (Th1) cells. Expressed in keratocytes.

It localises to the cell membrane. It is found in the endoplasmic reticulum. Its subcellular location is the golgi apparatus. It catalyses the reaction Na(+)(in) = Na(+)(out). It carries out the reaction K(+)(in) = K(+)(out). Displays weak voltage dependence, and repressed by decavanadate. Calmodulin-binding confers the Ca(2+) sensitivity. ATP is able to restore Ca(2+) sensitivity after desensitization. ATP inhibits channel activity. Phosphatidylinositol 4,5-bisphosphate (PIP2)-binding strongly enhances activity, by increasing the channel's Ca(2+) sensitivity and shifting its voltage dependence of activation towards negative potentials. Activity is also enhanced by 3,5-bis(trifluoromethyl)pyrazole derivative (BTP2). Exhibits pronounced temperature sensitivity, with activities strongly intensifying near physiological temperatures. In terms of biological role, calcium-activated selective cation channel that mediates membrane depolarization. While it is activated by increase in intracellular Ca(2+), it is impermeable to it. Mediates transport of monovalent cations (Na(+) &gt; K(+) &gt; Cs(+) &gt; Li(+)), leading to depolarize the membrane. It thereby plays a central role in cadiomyocytes, neurons from entorhinal cortex, dorsal root and vomeronasal neurons, endocrine pancreas cells, kidney epithelial cells, cochlea hair cells etc. Participates in T-cell activation by modulating Ca(2+) oscillations after T lymphocyte activation, which is required for NFAT-dependent IL2 production. Involved in myogenic constriction of cerebral arteries. Controls insulin secretion in pancreatic beta-cells. May also be involved in pacemaking or could cause irregular electrical activity under conditions of Ca(2+) overload. Affects T-helper 1 (Th1) and T-helper 2 (Th2) cell motility and cytokine production through differential regulation of calcium signaling and NFATC1 localization. Enhances cell proliferation through up-regulation of the beta-catenin signaling pathway. Plays a role in keratinocyte differentiation. Its function is as follows. Lacks channel activity. The chain is Transient receptor potential cation channel subfamily M member 4 from Homo sapiens (Human).